Here is a 258-residue protein sequence, read N- to C-terminus: Granzyme K (258 aa).

The signal sequence occupies residues 1–23 (MSFSSSALVFLVAGIYMSSESFH). Positions 24 to 25 (TE) are cleaved as a propeptide — activation peptide. Positions 26-253 (IIGGREVQPH…YQTWIKSKLA (228 aa)) constitute a Peptidase S1 domain. Cys-51 and Cys-67 are joined by a disulfide. Catalysis depends on charge relay system residues His-66 and Asp-110. Intrachain disulfides connect Cys-143-Cys-214, Cys-175-Cys-193, and Cys-204-Cys-228. Residue Ser-208 is the Charge relay system of the active site.

It belongs to the peptidase S1 family. Granzyme subfamily. As to expression, speen, lungs and liver non-parenchymal cells.

It localises to the cytoplasmic granule. This Rattus norvegicus (Rat) protein is Granzyme K (Gzmk).